Reading from the N-terminus, the 514-residue chain is ATP synthase subunit alpha (514 aa).

Position 170 to 177 (170 to 177 (GDRQTGKT)) interacts with ATP.

It belongs to the ATPase alpha/beta chains family. F-type ATPases have 2 components, CF(1) - the catalytic core - and CF(0) - the membrane proton channel. CF(1) has five subunits: alpha(3), beta(3), gamma(1), delta(1), epsilon(1). CF(0) has three main subunits: a(1), b(2) and c(9-12). The alpha and beta chains form an alternating ring which encloses part of the gamma chain. CF(1) is attached to CF(0) by a central stalk formed by the gamma and epsilon chains, while a peripheral stalk is formed by the delta and b chains.

Its subcellular location is the cell inner membrane. It catalyses the reaction ATP + H2O + 4 H(+)(in) = ADP + phosphate + 5 H(+)(out). Produces ATP from ADP in the presence of a proton gradient across the membrane. The alpha chain is a regulatory subunit. The polypeptide is ATP synthase subunit alpha (Psychrobacter arcticus (strain DSM 17307 / VKM B-2377 / 273-4)).